A 1052-amino-acid chain; its full sequence is Isoleucine--tRNA ligase (1052 aa).

A 'HIGH' region motif is present at residues 58 to 68; the sequence is PFANGLPHYGH. The short motif at 627 to 631 is the 'KMSKS' region element; it reads KMSKS. ATP is bound at residue Lys630.

Belongs to the class-I aminoacyl-tRNA synthetase family. IleS type 2 subfamily. Monomer. Zn(2+) serves as cofactor.

It is found in the cytoplasm. It carries out the reaction tRNA(Ile) + L-isoleucine + ATP = L-isoleucyl-tRNA(Ile) + AMP + diphosphate. Functionally, catalyzes the attachment of isoleucine to tRNA(Ile). As IleRS can inadvertently accommodate and process structurally similar amino acids such as valine, to avoid such errors it has two additional distinct tRNA(Ile)-dependent editing activities. One activity is designated as 'pretransfer' editing and involves the hydrolysis of activated Val-AMP. The other activity is designated 'posttransfer' editing and involves deacylation of mischarged Val-tRNA(Ile). In Corynebacterium diphtheriae (strain ATCC 700971 / NCTC 13129 / Biotype gravis), this protein is Isoleucine--tRNA ligase.